The chain runs to 767 residues: Protein transport protein Sec23B (767 aa).

Alanine 2 bears the N-acetylalanine mark. 4 residues coordinate Zn(2+): cysteine 61, cysteine 66, cysteine 85, and cysteine 88. Position 564 is an N6-acetyllysine (lysine 564). A Gelsolin-like repeat occupies 634–720 (PEPVLLDSSS…EHGGSQARFL (87 aa)).

It belongs to the SEC23/SEC24 family. SEC23 subfamily. In terms of assembly, COPII is composed of at least five proteins: the Sec23/24 complex, the Sec13/31 complex and Sar1. Interacts with SAR1A.

It localises to the cytoplasmic vesicle. Its subcellular location is the COPII-coated vesicle membrane. It is found in the endoplasmic reticulum membrane. The protein resides in the cytoplasm. The protein localises to the cytosol. Component of the coat protein complex II (COPII) which promotes the formation of transport vesicles from the endoplasmic reticulum (ER). The coat has two main functions, the physical deformation of the endoplasmic reticulum membrane into vesicles and the selection of cargo molecules for their transport to the Golgi complex. This is Protein transport protein Sec23B from Mus musculus (Mouse).